The chain runs to 930 residues: Protein translocase subunit SecA (930 aa).

ATP-binding positions include Gln83, 101-105 (GEGKT), and Asp491.

This sequence belongs to the SecA family. In terms of assembly, monomer and homodimer. Part of the essential Sec protein translocation apparatus which comprises SecA, SecYEG and auxiliary proteins SecDF. Other proteins may also be involved.

The protein resides in the cell inner membrane. It is found in the cellular thylakoid membrane. It localises to the cytoplasm. The enzyme catalyses ATP + H2O + cellular proteinSide 1 = ADP + phosphate + cellular proteinSide 2.. Functionally, part of the Sec protein translocase complex. Interacts with the SecYEG preprotein conducting channel. Has a central role in coupling the hydrolysis of ATP to the transfer of proteins into and across the cell membrane, serving as an ATP-driven molecular motor driving the stepwise translocation of polypeptide chains across the membrane. In terms of biological role, probably participates in protein translocation into and across both the cytoplasmic and thylakoid membranes in cyanobacterial cells. This is Protein translocase subunit SecA from Trichormus variabilis (strain ATCC 29413 / PCC 7937) (Anabaena variabilis).